Consider the following 182-residue polypeptide: UPF0397 protein SPH_0594 (182 aa).

The next 5 helical transmembrane spans lie at 10–30, 46–66, 73–93, 109–129, and 148–168; these read VVAV…NIPT, LLSI…GHAI, YGLW…VGLF, ILIF…VLAP, and IVAG…LLLA.

Belongs to the UPF0397 family.

It is found in the cell membrane. The sequence is that of UPF0397 protein SPH_0594 from Streptococcus pneumoniae (strain Hungary19A-6).